A 521-amino-acid polypeptide reads, in one-letter code: Organic cation/carnitine transporter 6 (521 aa).

Residues 1-37 (MADPISEPLLSHLTDDSGVNEKTRLEALTFDKIVEQS) lie on the Cytoplasmic side of the membrane. The helical transmembrane segment at 38-58 (LSDFGFWQFFQISLVGLALLF) threads the bilayer. Residues 59 to 123 (DAQQIFITVY…GLECSSSLLR (65 aa)) lie on the Extracellular side of the membrane. The N-linked (GlcNAc...) asparagine glycan is linked to N79. Residues 124 to 144 (GMPSSAFYIGAIVGGFFLALI) form a helical membrane-spanning segment. The Cytoplasmic segment spans residues 145–154 (PDDSLGRKKL). The helical transmembrane segment at 155–177 (VLFSTFAMSITSISVIFSTNVWI) threads the bilayer. Residues 178 to 182 (YTFLK) lie on the Extracellular side of the membrane. Residues 183–200 (FIIGFSRSQTWSYALVLI) traverse the membrane as a helical segment. An ATP-binding site is contributed by 200–207 (ISERVSTR). The Cytoplasmic segment spans residues 201-213 (SERVSTRWRPRAT). A helical membrane pass occupies residues 214-234 (MIPFTLFVLGFMSLSGIAFLA). The Extracellular segment spans residues 235–241 (QDSSWRY). The helical transmembrane segment at 242 to 262 (LYLYTSVPAVFYCIFLYLFAL) threads the bilayer. Residues 263–326 (ESPRWLHMQG…FFFRKWAFRR (64 aa)) lie on the Cytoplasmic side of the membrane. The helical transmembrane segment at 327–347 (ILVVMIIMFGLGISYYGVPLA) threads the bilayer. At 348 to 356 (ARDIDVNIY) the chain is on the extracellular side. The helical transmembrane segment at 357–377 (LSETLNALVELPTFVITPILL) threads the bilayer. Topologically, residues 378–385 (ERFNRRSS) are cytoplasmic. A helical membrane pass occupies residues 386 to 406 (VLVNTLLGGASGVLCFVLSIL). Over 407 to 412 (GKTEIA) the chain is Extracellular. Residues 413 to 433 (FAFELGTFFCARIGFNLMAVF) traverse the membrane as a helical segment. At 434 to 447 (MVEMFPTCVRSSAT) the chain is on the cytoplasmic side. Residues 448–468 (MMFRQALVVGGACCPLIASIG) traverse the membrane as a helical segment. The Extracellular segment spans residues 469–473 (RYIPS). The chain crosses the membrane as a helical span at residues 474-494 (VSFAIFGIAMSGLGMFVLILP). Residues 495–521 (ETKGLSLCDSMEEQEKRDQAVNTSHVC) are Cytoplasmic-facing.

It belongs to the major facilitator (TC 2.A.1) superfamily. Organic cation transporter (TC 2.A.1.19) family. In terms of tissue distribution, expressed in roots and stems. In the stem of secondary inflorescences, localized to the phloem. Also present in flowers, specifically in the stamen, in the filaments and the connective, and restricted to major veins in leaves.

Its subcellular location is the vacuole membrane. Its function is as follows. High affinity carnitine transporter involved in the active cellular uptake of carnitine. Also transports organic cations. The protein is Organic cation/carnitine transporter 6 (OCT6) of Arabidopsis thaliana (Mouse-ear cress).